The chain runs to 255 residues: Protein N-terminal and lysine N-methyltransferase efm7 (255 aa).

Residues 1–25 form a disordered region; it reads MADNDFEGFGIFEEPEGFRPSTPPP. S-adenosyl-L-methionine-binding positions include Trp58, 84–86, Asp106, Trp137, and Ser162; that span reads GAG.

It belongs to the class I-like SAM-binding methyltransferase superfamily. EFM7 family.

Its subcellular location is the cytoplasm. Its function is as follows. S-adenosyl-L-methionine-dependent protein methyltransferase that trimethylates the N-terminal glycine 'Gly-2' of elongation factor 1-alpha, before also catalyzing the mono- and dimethylation of 'Lys-3'. The sequence is that of Protein N-terminal and lysine N-methyltransferase efm7 from Schizosaccharomyces pombe (strain 972 / ATCC 24843) (Fission yeast).